A 481-amino-acid chain; its full sequence is UDP-glucose 6-dehydrogenase (481 aa).

Residues 16-21 (GAGYVG), Asp41, Lys46, 94-98 (VNTPT), 135-136 (ST), and Glu172 contribute to the NAD(+) site. Substrate is bound by residues 168–172 (EFLAE), 227–231 (KLVAN), Arg267, and 274–280 (QASVGFG). The active-site Nucleophile is the Cys283. NAD(+) is bound at residue 283 to 286 (CFQK). 345–346 (FK) is a substrate binding site. Arg353 contacts NAD(+). Arg447 contacts substrate.

This sequence belongs to the UDP-glucose/GDP-mannose dehydrogenase family. Expressed in the vulva and in oocytes.

It carries out the reaction UDP-alpha-D-glucose + 2 NAD(+) + H2O = UDP-alpha-D-glucuronate + 2 NADH + 3 H(+). The protein operates within nucleotide-sugar biosynthesis; UDP-alpha-D-glucuronate biosynthesis; UDP-alpha-D-glucuronate from UDP-alpha-D-glucose: step 1/1. Its function is as follows. Involved in the biosynthesis of glycosaminoglycans; hyaluronan, chondroitin sulfate, and heparan sulfate. This chain is UDP-glucose 6-dehydrogenase (sqv-4), found in Caenorhabditis elegans.